A 108-amino-acid chain; its full sequence is uncharacterized protein (108 aa).

This is an uncharacterized protein from Enterobacteria phage T4 (Bacteriophage T4).